The chain runs to 389 residues: Aspartic protease pepA (389 aa).

Residues 1 to 20 form the signal peptide; that stretch reads MVLINQLGAVLAVCATLTVA. Positions 21–67 are cleaved as a propeptide — activation peptide; sequence APTKGKARFNVPQVAIPKKMVHHPAVSYARALHKFGMKVPKTVQDAA. The Peptidase A1 domain maps to 82 to 386; sequence YVTQVTVGEG…DTQGPRIGFA (305 aa). Residue D98 is part of the active site. N257 carries an N-linked (GlcNAc...) asparagine glycan. D279 is a catalytic residue. C315 and C348 are joined by a disulfide.

This sequence belongs to the peptidase A1 family. As to quaternary structure, monomer.

It is found in the secreted. Secreted aspartic endopeptidase that allows assimilation of proteinaceous substrates. The scissile peptide bond is attacked by a nucleophilic water molecule activated by two aspartic residues in the active site. Shows a broad primary substrate specificity. Favors hydrophobic residues at the P1 and P1' positions. The chain is Aspartic protease pepA from Arthroderma otae (strain ATCC MYA-4605 / CBS 113480) (Microsporum canis).